A 419-amino-acid chain; its full sequence is Protein phosphatase methylesterase 1 (419 aa).

Residues 1–12 (MSQLHRGMHKKP) show a composition bias toward basic residues. Residues 1–75 (MSQLHRGMHK…KSAASPTVPA (75 aa)) form a disordered region. Residues 32-52 (TETEETVECTEEEEEQDETDG) are compositionally biased toward acidic residues. Catalysis depends on residues serine 230, aspartate 256, and histidine 383.

The protein belongs to the AB hydrolase superfamily.

The catalysed reaction is [phosphatase 2A protein]-C-terminal L-leucine methyl ester + H2O = [phosphatase 2A protein]-C-terminal L-leucine + methanol + H(+). In terms of biological role, demethylates proteins that have been reversibly carboxymethylated. Demethylates the phosphatase PP2A catalytic subunit. This Yarrowia lipolytica (strain CLIB 122 / E 150) (Yeast) protein is Protein phosphatase methylesterase 1 (PPE1).